The following is a 161-amino-acid chain: Nucleotide-binding protein Geob_0921 (161 aa).

The protein belongs to the YajQ family.

In terms of biological role, nucleotide-binding protein. The chain is Nucleotide-binding protein Geob_0921 from Geotalea daltonii (strain DSM 22248 / JCM 15807 / FRC-32) (Geobacter daltonii).